A 470-amino-acid polypeptide reads, in one-letter code: Desmin (470 aa).

The interval 2 to 108 is head; sequence SQAYSSSQRV…QEFLTTRTNE (107 aa). S7 is modified (phosphoserine; by CDK1). S12 is modified (phosphoserine; by AURKB). R16 is modified (omega-N-methylarginine). T17 is subject to Phosphothreonine; by AURKB and ROCK1. S28 bears the Phosphoserine; by CDK1 mark. Phosphoserine is present on S31. A Phosphoserine; by CDK1 modification is found at S32. R37 carries the post-translational modification Asymmetric dimethylarginine; alternate. Position 37 is an omega-N-methylarginine; alternate (R37). The residue at position 45 (S45) is a Phosphoserine. An ADP-ribosylarginine modification is found at R58. S60 carries the phosphoserine; by AURKB modification. R70 is subject to Omega-N-methylarginine. At T77 the chain carries Phosphothreonine; by ROCK1. At S81 the chain carries Phosphoserine. An IF rod domain is found at 108–416; the sequence is EKVELQELND…KLLEGEESRI (309 aa). A coil 1A region spans residues 109–141; the sequence is KVELQELNDRFANYIEKVRFLEQQNAALAAEVN. The segment at 142–151 is linker 1; the sequence is RLKGREPTRV. Residues 152 to 252 form a coil 1B region; the sequence is AEIYEEELRE…HEEEIRELQA (101 aa). The linker 12 stretch occupies residues 253-268; it reads QLQEQQVQVEMDMSKP. Residues 268 to 415 form an interaction with NEB region; the sequence is PDLTAALRDI…RKLLEGEESR (148 aa). The interval 269-287 is coil 2A; it reads DLTAALRDIRAQYETIAAK. Residues 288-295 are linker 2; sequence NISEAEEW. Residues S290, S358, S361, and S424 each carry the phosphoserine modification. The segment at 296–412 is coil 2B; sequence YKSKVSDLTQ…ATYRKLLEGE (117 aa). The interval 413–470 is tail; that stretch reads ESRINLPIQTFSALNFRETSPEQRGSEVHTKKTVMIKTIETRDGEVVSEATQQQHEVL. The interaction with CRYAB stretch occupies residues 438–453; that stretch reads SEVHTKKTVMIKTIET.

This sequence belongs to the intermediate filament family. In terms of assembly, homomer. Interacts with DST. Interacts with MTM1. Interacts with EPPK1; interaction is dependent of higher-order structure of intermediate filament. Interacts with CRYAB. Interacts with NEB (via nebulin repeats 160-164). Interacts (via rod region) with NEBL (via nebulin repeats 1-5). Interacts with ASB2; the interaction targets DES for proteasomal degradation. Interacts with PKP1. Interacts with FLII. Post-translationally, ADP-ribosylation prevents ability to form intermediate filaments. In terms of processing, phosphorylation at Ser-7, Ser-28 and Ser-32 by CDK1 and phosphorylation at Ser-60 by AURKB contribute to efficient separation of desmin intermediate filaments during mitosis. Ubiquitination by a SCF-like complex containing ASB2 leads to proteasomal degradation.

The protein resides in the cytoplasm. The protein localises to the myofibril. It localises to the sarcomere. Its subcellular location is the z line. It is found in the cell membrane. The protein resides in the sarcolemma. The protein localises to the nucleus. It localises to the cell tip. Its subcellular location is the nucleus envelope. In terms of biological role, muscle-specific type III intermediate filament essential for proper muscular structure and function. Plays a crucial role in maintaining the structure of sarcomeres, inter-connecting the Z-disks and forming the myofibrils, linking them not only to the sarcolemmal cytoskeleton, but also to the nucleus and mitochondria, thus providing strength for the muscle fiber during activity. In adult striated muscle they form a fibrous network connecting myofibrils to each other and to the plasma membrane from the periphery of the Z-line structures. May act as a sarcomeric microtubule-anchoring protein: specifically associates with detyrosinated tubulin-alpha chains, leading to buckled microtubules and mechanical resistance to contraction. Required for nuclear membrane integrity, via anchoring at the cell tip and nuclear envelope, resulting in maintenance of microtubule-derived intracellular mechanical forces. Contributes to the transcriptional regulation of the NKX2-5 gene in cardiac progenitor cells during a short period of cardiomyogenesis and in cardiac side population stem cells in the adult. Plays a role in maintaining an optimal conformation of nebulette (NEB) on heart muscle sarcomeres to bind and recruit cardiac alpha-actin. This is Desmin (DES) from Bos taurus (Bovine).